Reading from the N-terminus, the 151-residue chain is Large ribosomal subunit protein bL9 (151 aa).

The protein belongs to the bacterial ribosomal protein bL9 family.

In terms of biological role, binds to the 23S rRNA. The polypeptide is Large ribosomal subunit protein bL9 (Bordetella avium (strain 197N)).